We begin with the raw amino-acid sequence, 603 residues long: NADH-ubiquinone oxidoreductase chain 5 (603 aa).

16 helical membrane passes run 4–24, 36–56, 87–107, 114–134, 137–157, 171–191, 200–220, 241–261, 272–292, 301–320, 325–347, 366–386, 407–429, 457–477, 482–502, and 583–603; these read YTTMAILTLTSLIPPITATLI, VKMTIASTFMISLFPTMMFMC, MMFIPIALFVTWSIMEFSLWY, INQFFKYLLIFLTTMLILVTA, LFQLFIGWEGVGIMSFLLIGW, AILYNRIGDIGFILALAWFLL, QMILLNSNPNFLPLAGLLLAA, TPVSALLHSSTMVVAGVFLLI, LIQTLTLCLGAITTLFTAICA, IVAFSTSSQLGLMVVTIGIN, AFLHICTHAFFKAMLFMCSGSII, LPLTSTSLTIGSLALTGMPFL, WALSTTLIATSLTSAYSTRMILL, LTIGSLLAGFLIINSIPPTSP, IPLYLKLTALSITLLGFLTAF, and MIKLYSLSLLIPLSLTLLLIM.

Belongs to the complex I subunit 5 family. Core subunit of respiratory chain NADH dehydrogenase (Complex I) which is composed of 45 different subunits.

The protein localises to the mitochondrion inner membrane. It carries out the reaction a ubiquinone + NADH + 5 H(+)(in) = a ubiquinol + NAD(+) + 4 H(+)(out). Its function is as follows. Core subunit of the mitochondrial membrane respiratory chain NADH dehydrogenase (Complex I) which catalyzes electron transfer from NADH through the respiratory chain, using ubiquinone as an electron acceptor. Essential for the catalytic activity and assembly of complex I. This chain is NADH-ubiquinone oxidoreductase chain 5 (MT-ND5), found in Hylobates lar (Lar gibbon).